The sequence spans 909 residues: E3 ubiquitin-protein ligase MARCHF6 (909 aa).

Met1 is subject to N-acetylmethionine. The RING-CH-type zinc-finger motif lies at 1-62; sequence MDTAEEDICR…ELCKHRFAFT (62 aa). Topologically, residues 1–91 are cytoplasmic; sequence MDTAEEDICR…LVTSIGTAIR (91 aa). Zn(2+) contacts are provided by Cys9, Cys12, Cys26, Cys28, His36, Cys39, Cys52, and Cys55. A helical membrane pass occupies residues 92–112; it reads YWFHYTLVAFAWLGVVPLTAC. The Extracellular segment spans residues 113-142; sequence RIYKCLFTGSVSSLLTLPLDMLSTENLLAD. A helical membrane pass occupies residues 143–163; it reads CLQGCFVVTCTLCAFISLVWL. Residues 164–283 are Cytoplasmic-facing; that stretch reads REQIVHGGAP…WERMLGLDGS (120 aa). Residues 186 to 256 form a disordered region; that stretch reads AGHHQNEAPV…AADANNGAQD (71 aa). Acidic residues predominate over residues 228–248; the sequence is QAEEEEEDNEEEDDAGVEDAA. The helical transmembrane segment at 284-304 threads the bilayer; sequence LVFLEHVFWVVSLNTLFILVF. Residues 305–336 are Extracellular-facing; the sequence is AFCPYHIGHFSLVGLGFEEHVQASHFEGLITT. Residues 337–357 form a helical membrane-spanning segment; it reads IVGYILLAITLIICHALATLV. The Cytoplasmic segment spans residues 358–376; the sequence is KFHRSRRLLGVCYIVVKVS. The chain crosses the membrane as a helical span at residues 377 to 397; sequence LLVVVEIGVFPLICGWWLDIC. The Extracellular portion of the chain corresponds to 398–421; sequence SLEMFDATLKDRELSFQSAPGTTM. The helical transmembrane segment at 422–442 threads the bilayer; it reads FLHWLVGMVYVFYFASFILLL. The Cytoplasmic portion of the chain corresponds to 443–480; that stretch reads REVLRPGVLWFLRNLNDPDFNPVQEMIHLPIYRHLRRF. A helical transmembrane segment spans residues 481-501; sequence ILSVIVFGSIVLLMLWLPIRI. Topologically, residues 502–519 are extracellular; that stretch reads IKSLLPNFLPYNVMLYSD. The chain crosses the membrane as a helical span at residues 520–540; the sequence is APVSELSLELLLLQVVLPALL. Topologically, residues 541-631 are cytoplasmic; the sequence is EQGHTRQWLK…YRRPLNFPLR (91 aa). A helical membrane pass occupies residues 632–652; it reads IFLLIVFMCITLLIASLICLT. Residues 653–677 lie on the Extracellular side of the membrane; sequence LPVFAGRWLMSFWTGTAKIHELYTA. The chain crosses the membrane as a helical span at residues 678-698; the sequence is ACGLYVCWLTIRAVTVLVAWM. Over 699 to 720 the chain is Cytoplasmic; it reads PQGRRVIFQKVKEWSLMIMKTL. A helical membrane pass occupies residues 721 to 741; sequence IVAVLLAGVVPLLLGLLFELV. The Extracellular segment spans residues 742-763; sequence IVAPLRVPLDQTPLFYPWQDWA. A helical transmembrane segment spans residues 764-784; sequence LGVLHAKIIAAITLMGPQWWL. Over 785–814 the chain is Cytoplasmic; that stretch reads KTVIEQVYANGIRNIDLHYIIRKLAAPVIS. A helical transmembrane segment spans residues 815–835; it reads VLLLSLCVPYVIASGAVPLLG. Residues 836-847 are Extracellular-facing; that stretch reads VTAEMQNLVHRR. Residues 848 to 868 form a helical membrane-spanning segment; it reads IYPFLLMVVVLMGILSFQVRQ. At 869–909 the chain is on the cytoplasmic side; that stretch reads FKRLYEHIKNDKYLVGQRLVNYERKSGKQGPSTPPPVSSQE.

It belongs to the DOA10/MARCHF6 family. As to quaternary structure, interacts with DIO2. Interacts with SQLE. Post-translationally, auto-ubiquitinated, which results in proteasomal degradation. Deubiquitinated by USP19; protecting MARCHF6 from p97-mediated proteasomal degradation.

It localises to the endoplasmic reticulum membrane. The enzyme catalyses S-ubiquitinyl-[E2 ubiquitin-conjugating enzyme]-L-cysteine + [acceptor protein]-L-lysine = [E2 ubiquitin-conjugating enzyme]-L-cysteine + N(6)-ubiquitinyl-[acceptor protein]-L-lysine.. The protein operates within protein modification; protein ubiquitination. Functionally, endoplasmic reticulum membrane-associated E3 ubiquitin ligase that plays a critical role in mitigating endoplasmic reticulum stress, the regulation of cholesterol and lipid homeostasis, and ferroptosis. Acts as a pivotal component of both the Ac/N-degron pathway (targeting the N-terminal acetyl group of substrates) and the ER-associated protein degradation-cytosol (ERAD-C) pathway (targeting misfolded substrates). For instance, mediates the degradation of Ac/N-degron-bearing proteins such as the G-protein regulator RGS2 and the lipid droplet protein PLIN2. Suppresses endoplasmic reticulum stress and ferroptosis through cytosolic POMC degradation. Prevents ferroptosis by acting as a NADPH sensor during lipid peroxidation through its C-terminal regulatory region. Facilitates also the degradation of selected endoplasmic reticulum proteins by associating with signal peptide peptidase for the turnover of endogenous tail-anchored proteins. Promotes ubiquitination of DIO2, leading to its degradation. By ubiquitinating and thereby modulating the stability of many proteins of the cholesterol pathway including SQLE, CYP51A1, CYP11A1 and HMGCR, acts as a crucial post-translational regulator of cholesterol synthesis. The protein is E3 ubiquitin-protein ligase MARCHF6 (Marchf6) of Mus musculus (Mouse).